Reading from the N-terminus, the 302-residue chain is Phosphatidylglycerol--prolipoprotein diacylglyceryl transferase (302 aa).

A run of 3 helical transmembrane segments spans residues 26–46 (WYAL…VMLV), 67–87 (LVLW…VLFY), and 108–128 (IWEG…AIVL). Residue arginine 156 coordinates a 1,2-diacyl-sn-glycero-3-phospho-(1'-sn-glycerol). The next 2 helical transmembrane spans lie at 231–251 (GALV…LEGV) and 263–283 (LGLT…VWLL).

Belongs to the Lgt family.

The protein resides in the cell inner membrane. It catalyses the reaction L-cysteinyl-[prolipoprotein] + a 1,2-diacyl-sn-glycero-3-phospho-(1'-sn-glycerol) = an S-1,2-diacyl-sn-glyceryl-L-cysteinyl-[prolipoprotein] + sn-glycerol 1-phosphate + H(+). Its pathway is protein modification; lipoprotein biosynthesis (diacylglyceryl transfer). Functionally, catalyzes the transfer of the diacylglyceryl group from phosphatidylglycerol to the sulfhydryl group of the N-terminal cysteine of a prolipoprotein, the first step in the formation of mature lipoproteins. The sequence is that of Phosphatidylglycerol--prolipoprotein diacylglyceryl transferase from Caulobacter sp. (strain K31).